The following is a 441-amino-acid chain: Deoxyguanosinetriphosphate triphosphohydrolase-like protein (441 aa).

The 192-residue stretch at 59-250 folds into the HD domain; the sequence is RLTHSLEVSQ…MELADDTAYA (192 aa).

This sequence belongs to the dGTPase family. Type 2 subfamily.

The chain is Deoxyguanosinetriphosphate triphosphohydrolase-like protein from Shewanella loihica (strain ATCC BAA-1088 / PV-4).